Consider the following 259-residue polypeptide: Insulin-induced gene 1 protein (259 aa).

Residues 1–66 lie on the Cytoplasmic side of the membrane; the sequence is MPRLHDHVWN…ARPGSWHHDL (66 aa). The interval 36–55 is disordered; that stretch reads PGVPEPEHAPRGQRAGTTGC. The helical transmembrane segment at 67-89 threads the bilayer; the sequence is VQRSLVLFSFGVVLALVLNLLQI. Topologically, residues 90–108 are extracellular; that stretch reads QRNVTLFPDEVIATIFSSA. A helical membrane pass occupies residues 109–126; it reads WWVPPCCGTAAAVVGLLY. Over 127–141 the chain is Cytoplasmic; sequence PCIDSHLGEPHKFKR. Glycyl lysine isopeptide (Lys-Gly) (interchain with G-Cter in ubiquitin) cross-links involve residues K138 and K140. The helical transmembrane segment at 142–164 threads the bilayer; the sequence is EWASVMRCIAVFVGINHASAKLD. At 165 to 167 the chain is on the extracellular side; it reads FAN. The chain crosses the membrane as a helical span at residues 168–186; sequence NVQLSLTLAALSLGLWWTF. The Cytoplasmic portion of the chain corresponds to 187-191; sequence DRSRS. S189 carries the phosphoserine modification. The chain crosses the membrane as a helical span at residues 192–213; sequence GLGLGITIAFLATLITQFLVYN. At 214–227 the chain is on the extracellular side; the sequence is GVYQYTSPDFLYIR. The helical transmembrane segment at 228–245 threads the bilayer; the sequence is SWLPCIFFSGGVTVGNIG. Topologically, residues 246–259 are cytoplasmic; sequence RQLAMGVPEKPHSD. Residues 253-259 carry the KxHxx motif; the sequence is PEKPHSD.

It belongs to the INSIG family. In terms of assembly, interacts with SCAP; interaction is direct and only takes place in the presence of sterols; it prevents interaction between SCAP and the coat protein complex II (COPII). Associates with the SCAP-SREBP complex (composed of SCAP and SREBF1/SREBP1 or SREBF2/SREBP2); association is mediated via its interaction with SCAP and only takes place in the presence of sterols. Interaction with SCAP is mutually exclusive with PAQR3. Interacts with HMGCR (via its SSD); the interaction, accelerated by sterols, leads to the recruitment of HMGCR to AMFR/gp78 for its ubiquitination by the sterol-mediated ERAD pathway. Interacts with AMFR/gp78 (via its membrane domain); the interaction recruits HMCR at the ER membrane for its ubiquitination and degradation by the sterol-mediated ERAD pathway. Interacts with SOAT2/ACAT2; leading to promote recruitment of AMFR/gp78 and subsequent ubiquitination of SOAT2/ACAT2. Interacts with RNF139. Interacts with RNF145. Phosphorylation at Ser-189 by PCK1 reduces binding to oxysterol, disrupting the interaction between INSIG1 and SCAP, thereby promoting nuclear translocation of SREBP proteins (SREBF1/SREBP1 or SREBF2/SREBP2) and subsequent transcription of downstream lipogenesis-related genes. In terms of processing, ubiquitinated by AMFR/gp78 in response to sterol deprivation, leading to its degradation: when the SCAP-SREBP complex becomes dissociated from INSIG1, INSIG1 is then ubiquitinated and degraded in proteasomes. Although ubiquitination is required for rapid INSIG1 degradation, it is not required for release of the SCAP-SREBP complex. Ubiquitinated by RNF139.

Its subcellular location is the endoplasmic reticulum membrane. In terms of biological role, oxysterol-binding protein that mediates feedback control of cholesterol synthesis by controlling both endoplasmic reticulum to Golgi transport of SCAP and degradation of HMGCR. Acts as a negative regulator of cholesterol biosynthesis by mediating the retention of the SCAP-SREBP complex in the endoplasmic reticulum, thereby blocking the processing of sterol regulatory element-binding proteins (SREBPs) SREBF1/SREBP1 and SREBF2/SREBP2. Binds oxysterol, including 25-hydroxycholesterol, regulating interaction with SCAP and retention of the SCAP-SREBP complex in the endoplasmic reticulum. In presence of oxysterol, interacts with SCAP, retaining the SCAP-SREBP complex in the endoplasmic reticulum, thereby preventing SCAP from escorting SREBF1/SREBP1 and SREBF2/SREBP2 to the Golgi. Sterol deprivation or phosphorylation by PCK1 reduce oxysterol-binding, disrupting the interaction between INSIG1 and SCAP, thereby promoting Golgi transport of the SCAP-SREBP complex, followed by processing and nuclear translocation of SREBF1/SREBP1 and SREBF2/SREBP2. Also regulates cholesterol synthesis by regulating degradation of HMGCR: initiates the sterol-mediated ubiquitin-mediated endoplasmic reticulum-associated degradation (ERAD) of HMGCR via recruitment of the reductase to the ubiquitin ligases AMFR/gp78 and/or RNF139. Also regulates degradation of SOAT2/ACAT2 when the lipid levels are low: initiates the ubiquitin-mediated degradation of SOAT2/ACAT2 via recruitment of the ubiquitin ligases AMFR/gp78. The polypeptide is Insulin-induced gene 1 protein (Mus musculus (Mouse)).